Consider the following 121-residue polypeptide: Large ribosomal subunit protein uL18 (121 aa).

Residues 1 to 25 (MKIVISKPDKNKIRQKRHRRVRGKL) form a disordered region. Residues 13–23 (IRQKRHRRVRG) are compositionally biased toward basic residues.

This sequence belongs to the universal ribosomal protein uL18 family. As to quaternary structure, part of the 50S ribosomal subunit; part of the 5S rRNA/L5/L18/L25 subcomplex. Contacts the 5S and 23S rRNAs.

Its function is as follows. This is one of the proteins that bind and probably mediate the attachment of the 5S RNA into the large ribosomal subunit, where it forms part of the central protuberance. The polypeptide is Large ribosomal subunit protein uL18 (Streptococcus pyogenes serotype M28 (strain MGAS6180)).